We begin with the raw amino-acid sequence, 396 residues long: NAD(P)H oxidoreductase RTN4IP1, mitochondrial (396 aa).

A mitochondrion-targeting transit peptide spans 1–40 (MGVLKTCVLRRSACAAACFWRRTVIPKPPFRGISTTSARS). Residues 52–393 (GKNEVLRFTQ…RGHARGKTVV (342 aa)) enclose the Enoyl reductase (ER) domain. 12 residues coordinate NADPH: serine 214, glycine 216, valine 217, serine 237, tyrosine 255, asparagine 276, leucine 300, alanine 341, phenylalanine 343, histidine 386, alanine 387, and arginine 388.

This sequence belongs to the zinc-containing alcohol dehydrogenase family. Quinone oxidoreductase subfamily. As to quaternary structure, interacts with RTN4, UQCRC1 and UQCRC2. In terms of tissue distribution, widely expressed in mitochondria-enriched tissues. Found in heart, kidney, liver, brain and spinal cord.

The protein localises to the mitochondrion matrix. It is found in the mitochondrion outer membrane. The enzyme catalyses a 3-demethylubiquinone + NADH + 2 H(+) = a 3-demethylubiquinol + NAD(+). It catalyses the reaction a 3-demethylubiquinone + NADPH + 2 H(+) = a 3-demethylubiquinol + NADP(+). It carries out the reaction 3-demethylubiquinone-10 + NADH + 2 H(+) = 3-demethylubiquinol-10 + NAD(+). The catalysed reaction is 3-demethylubiquinone-10 + NADPH + 2 H(+) = 3-demethylubiquinol-10 + NADP(+). It participates in cofactor biosynthesis; ubiquinone biosynthesis. NAD(P)H oxidoreductase involved in the ubiquinone biosynthetic pathway. Required for the O-methyltransferase activity of COQ3. Able to catalyze the oxidoreduction of 3-demethylubiquinone into 3-demethylubiquinol in vitro. However, it is unclear if 3-demethylubiquinone constitutes a substrate in vivo. May also play a role in the regulation of retinal ganglion cell (RGC) neurite outgrowth, and hence in the development of the inner retina and optic nerve. Appears to be a potent inhibitor of regeneration following spinal cord injury. This chain is NAD(P)H oxidoreductase RTN4IP1, mitochondrial, found in Mus musculus (Mouse).